The primary structure comprises 101 residues: Peroxisomal biogenesis factor 39 (101 aa).

It localises to the peroxisome. Functionally, may be a peroxin involved in the PTS2-mediated protein import pathway. In Homo sapiens (Human), this protein is Peroxisomal biogenesis factor 39.